The sequence spans 122 residues: Large ribosomal subunit protein bL12 (122 aa).

It belongs to the bacterial ribosomal protein bL12 family. Homodimer. Part of the ribosomal stalk of the 50S ribosomal subunit. Forms a multimeric L10(L12)X complex, where L10 forms an elongated spine to which 2 to 4 L12 dimers bind in a sequential fashion. Binds GTP-bound translation factors.

In terms of biological role, forms part of the ribosomal stalk which helps the ribosome interact with GTP-bound translation factors. Is thus essential for accurate translation. The polypeptide is Large ribosomal subunit protein bL12 (Streptococcus pneumoniae serotype 19F (strain G54)).